Reading from the N-terminus, the 377-residue chain is Dihydroorotate dehydrogenase (quinone) (377 aa).

Residues 68-72 (AGFDK) and Thr92 each bind FMN. Position 72 (Lys72) interacts with substrate. Substrate is bound at residue 117-121 (NRMGF). Positions 149 and 182 each coordinate FMN. Asn182 is a binding site for substrate. Ser185 functions as the Nucleophile in the catalytic mechanism. Asn187 contributes to the substrate binding site. FMN is bound by residues Lys224 and Thr252. Residue 253-254 (NT) participates in substrate binding. FMN contacts are provided by residues Gly278, Gly307, and 328-329 (YT).

Belongs to the dihydroorotate dehydrogenase family. Type 2 subfamily. In terms of assembly, monomer. FMN serves as cofactor.

The protein localises to the cell membrane. It carries out the reaction (S)-dihydroorotate + a quinone = orotate + a quinol. Its pathway is pyrimidine metabolism; UMP biosynthesis via de novo pathway; orotate from (S)-dihydroorotate (quinone route): step 1/1. Catalyzes the conversion of dihydroorotate to orotate with quinone as electron acceptor. This Thermobifida fusca (strain YX) protein is Dihydroorotate dehydrogenase (quinone).